Consider the following 141-residue polypeptide: Envelope glycoprotein L (141 aa).

The signal sequence occupies residues 1–19 (MKWLLGAYVCLCLANILNA). The tract at residues 21-131 (IPNPCCNVFA…TSAIKFKSKY (111 aa)) is interaction with gH.

It belongs to the herpesviridae glycoprotein L family. As to quaternary structure, interacts with glycoprotein H (gH); this interaction is necessary for the correct processing and cell surface expression of gH. The heterodimer gH/gL seems to interact with gB trimers during fusion.

It is found in the virion membrane. The protein resides in the host cell membrane. Its subcellular location is the host Golgi apparatus. The protein localises to the host trans-Golgi network. In terms of biological role, the heterodimer glycoprotein H-glycoprotein L is required for the fusion of viral and plasma membranes leading to virus entry into the host cell. Acts as a functional inhibitor of gH and maintains gH in an inhibited form. Upon binding to host integrins, gL dissociates from gH leading to activation of the viral fusion glycoproteins gB and gH. The chain is Envelope glycoprotein L from Saimiriine herpesvirus 2 (strain 11) (SaHV-2).